Consider the following 555-residue polypeptide: Dihydroxy-acid dehydratase (555 aa).

Residue cysteine 46 coordinates [2Fe-2S] cluster. A Mg(2+)-binding site is contributed by aspartate 78. Cysteine 119 contacts [2Fe-2S] cluster. Mg(2+) contacts are provided by aspartate 120 and lysine 121. At lysine 121 the chain carries N6-carboxylysine. Cysteine 191 contributes to the [2Fe-2S] cluster binding site. Glutamate 442 contributes to the Mg(2+) binding site. Serine 468 functions as the Proton acceptor in the catalytic mechanism.

Belongs to the IlvD/Edd family. Homodimer. [2Fe-2S] cluster serves as cofactor. It depends on Mg(2+) as a cofactor.

It catalyses the reaction (2R)-2,3-dihydroxy-3-methylbutanoate = 3-methyl-2-oxobutanoate + H2O. The catalysed reaction is (2R,3R)-2,3-dihydroxy-3-methylpentanoate = (S)-3-methyl-2-oxopentanoate + H2O. It participates in amino-acid biosynthesis; L-isoleucine biosynthesis; L-isoleucine from 2-oxobutanoate: step 3/4. Its pathway is amino-acid biosynthesis; L-valine biosynthesis; L-valine from pyruvate: step 3/4. Its function is as follows. Functions in the biosynthesis of branched-chain amino acids. Catalyzes the dehydration of (2R,3R)-2,3-dihydroxy-3-methylpentanoate (2,3-dihydroxy-3-methylvalerate) into 2-oxo-3-methylpentanoate (2-oxo-3-methylvalerate) and of (2R)-2,3-dihydroxy-3-methylbutanoate (2,3-dihydroxyisovalerate) into 2-oxo-3-methylbutanoate (2-oxoisovalerate), the penultimate precursor to L-isoleucine and L-valine, respectively. This Thermus thermophilus (strain ATCC 27634 / DSM 579 / HB8) protein is Dihydroxy-acid dehydratase.